A 133-amino-acid chain; its full sequence is DNA-directed RNA polymerase subunit omega (133 aa).

Belongs to the RNA polymerase subunit omega family. As to quaternary structure, the RNAP catalytic core consists of 2 alpha, 1 beta, 1 beta' and 1 omega subunit. When a sigma factor is associated with the core the holoenzyme is formed, which can initiate transcription.

It catalyses the reaction RNA(n) + a ribonucleoside 5'-triphosphate = RNA(n+1) + diphosphate. Its function is as follows. Promotes RNA polymerase assembly. Latches the N- and C-terminal regions of the beta' subunit thereby facilitating its interaction with the beta and alpha subunits. In Brucella abortus (strain S19), this protein is DNA-directed RNA polymerase subunit omega.